The chain runs to 136 residues: Large ribosomal subunit protein eL27 (136 aa).

Residues 5-40 enclose the KOW domain; sequence MKPGKVVMVLAGRYAGRKAVIVKNIDDGTADRPYSH.

Belongs to the eukaryotic ribosomal protein eL27 family. Component of the large ribosomal subunit.

The protein localises to the cytoplasm. It is found in the cytosol. The protein resides in the rough endoplasmic reticulum. Its function is as follows. Component of the large ribosomal subunit. The protein is Large ribosomal subunit protein eL27 (rpl27) of Hippocampus comes (Tiger tail seahorse).